The sequence spans 124 residues: uncharacterized protein (124 aa).

This is an uncharacterized protein from Lactobacillus acidophilus.